The following is a 459-amino-acid chain: tRNA modification GTPase MnmE (459 aa).

Positions 20, 85, and 124 each coordinate (6S)-5-formyl-5,6,7,8-tetrahydrofolate. The TrmE-type G domain occupies 221–380 (GLSTVIIGRP…LEEAIQSLFY (160 aa)). Asparagine 231 is a K(+) binding site. GTP-binding positions include 231–236 (NVGKSS), 250–256 (TDIPGTT), and 275–278 (DTAG). Serine 235 provides a ligand contact to Mg(2+). Threonine 250, isoleucine 252, and threonine 255 together coordinate K(+). A Mg(2+)-binding site is contributed by threonine 256. Lysine 459 provides a ligand contact to (6S)-5-formyl-5,6,7,8-tetrahydrofolate.

Belongs to the TRAFAC class TrmE-Era-EngA-EngB-Septin-like GTPase superfamily. TrmE GTPase family. Homodimer. Heterotetramer of two MnmE and two MnmG subunits. It depends on K(+) as a cofactor.

It localises to the cytoplasm. Functionally, exhibits a very high intrinsic GTPase hydrolysis rate. Involved in the addition of a carboxymethylaminomethyl (cmnm) group at the wobble position (U34) of certain tRNAs, forming tRNA-cmnm(5)s(2)U34. The polypeptide is tRNA modification GTPase MnmE (Bacillus velezensis (strain DSM 23117 / BGSC 10A6 / LMG 26770 / FZB42) (Bacillus amyloliquefaciens subsp. plantarum)).